The following is a 244-amino-acid chain: Fumarate reductase iron-sulfur subunit (244 aa).

Y14 lines the a menaquinone pocket. The 2Fe-2S ferredoxin-type domain maps to 16 to 97 (PEVDTAPHSA…GMKVEALANF (82 aa)). C58, C63, C66, and C78 together coordinate [2Fe-2S] cluster. The 30-residue stretch at 140–169 (MAKYHQFSGCINCGLCYAACPQFGLNPEFI) folds into the 4Fe-4S ferredoxin-type domain. Positions 149, 152, and 155 each coordinate [4Fe-4S] cluster. [3Fe-4S] cluster contacts are provided by C159, C205, and C211. C215 lines the [4Fe-4S] cluster pocket. Residue 226–229 (QQGK) participates in a menaquinone binding.

The protein belongs to the succinate dehydrogenase/fumarate reductase iron-sulfur protein family. As to quaternary structure, fumarate dehydrogenase forms part of an enzyme complex containing four subunits: a flavoprotein, an iron-sulfur, and two hydrophobic anchor proteins. [2Fe-2S] cluster serves as cofactor. Requires [3Fe-4S] cluster as cofactor. The cofactor is [4Fe-4S] cluster.

The protein localises to the cell inner membrane. The enzyme catalyses a quinone + succinate = fumarate + a quinol. It carries out the reaction a menaquinone + succinate = a menaquinol + fumarate. Two distinct, membrane-bound, FAD-containing enzymes are responsible for the catalysis of fumarate and succinate interconversion; the fumarate reductase is used in anaerobic growth, and the succinate dehydrogenase is used in aerobic growth. The polypeptide is Fumarate reductase iron-sulfur subunit (frdB) (Escherichia coli O157:H7).